A 75-amino-acid polypeptide reads, in one-letter code: U6-lycotoxin-Ls1a (75 aa).

The first 21 residues, 1-21, serve as a signal peptide directing secretion; that stretch reads MKLLLFTALVLVVISLIEVEA. The propeptide occupies 22–25; that stretch reads ENER.

The protein belongs to the neurotoxin 19 (CSTX) family. 06 (U6-Lctx) subfamily. Post-translationally, contains 4 disulfide bonds. As to expression, expressed by the venom gland.

It localises to the secreted. The protein is U6-lycotoxin-Ls1a of Lycosa singoriensis (Wolf spider).